The primary structure comprises 88 residues: Small ribosomal subunit protein uS15 (88 aa).

The protein belongs to the universal ribosomal protein uS15 family. As to quaternary structure, part of the 30S ribosomal subunit. Forms a bridge to the 50S subunit in the 70S ribosome, contacting the 23S rRNA.

In terms of biological role, one of the primary rRNA binding proteins, it binds directly to 16S rRNA where it helps nucleate assembly of the platform of the 30S subunit by binding and bridging several RNA helices of the 16S rRNA. Functionally, forms an intersubunit bridge (bridge B4) with the 23S rRNA of the 50S subunit in the ribosome. The sequence is that of Small ribosomal subunit protein uS15 from Leptospira borgpetersenii serovar Hardjo-bovis (strain JB197).